Consider the following 410-residue polypeptide: E3 ubiquitin-protein ligase ICP0 (410 aa).

The RING-type zinc-finger motif lies at 46 to 85 (CPICLDVAATEAQTLPCMHKFCLDCIQRWTLTSTACPLCN). Positions 243–410 (TSESEAHSDS…IFIDLTQDDD (168 aa)) are disordered. Residues 287–315 (APRRSPRRARRAAVLRREQRRTRCLRRGR) show a composition bias toward basic residues. Low complexity-rich tracts occupy residues 329–340 (SSGEGSSAQHGA) and 348–399 (GSAN…PRSA).

Auto-ubiquitinated.

The enzyme catalyses S-ubiquitinyl-[E2 ubiquitin-conjugating enzyme]-L-cysteine + [acceptor protein]-L-lysine = [E2 ubiquitin-conjugating enzyme]-L-cysteine + N(6)-ubiquitinyl-[acceptor protein]-L-lysine.. In terms of biological role, evades nuclear antiviral defenses triggered by dsDNA viruses. Acts during the initial stages of lytic infection and the reactivation of latent viral genome. Prevents the antiviral effect of nuclear bodies by degrading host PML and SP100. This chain is E3 ubiquitin-protein ligase ICP0 (EP0), found in Sus scrofa (Pig).